Reading from the N-terminus, the 411-residue chain is Arginine deiminase (411 aa).

The Amidino-cysteine intermediate role is filled by Cys-401.

The protein belongs to the arginine deiminase family.

The protein localises to the cytoplasm. It catalyses the reaction L-arginine + H2O = L-citrulline + NH4(+). It participates in amino-acid degradation; L-arginine degradation via ADI pathway; carbamoyl phosphate from L-arginine: step 1/2. This Streptococcus pyogenes serotype M49 (strain NZ131) protein is Arginine deiminase.